We begin with the raw amino-acid sequence, 199 residues long: LexA repressor (199 aa).

Residues 28–47 constitute a DNA-binding region (H-T-H motif); sequence IRDIAKHFKLTPRGAHIHVI. Catalysis depends on for autocatalytic cleavage activity residues serine 120 and lysine 157.

Belongs to the peptidase S24 family. In terms of assembly, homodimer.

The enzyme catalyses Hydrolysis of Ala-|-Gly bond in repressor LexA.. Functionally, represses a number of genes involved in the response to DNA damage (SOS response), including recA and lexA. In the presence of single-stranded DNA, RecA interacts with LexA causing an autocatalytic cleavage which disrupts the DNA-binding part of LexA, leading to derepression of the SOS regulon and eventually DNA repair. This chain is LexA repressor, found in Thermosipho melanesiensis (strain DSM 12029 / CIP 104789 / BI429).